The sequence spans 365 residues: Protein RecA (365 aa).

An ATP-binding site is contributed by 73–80 (GPESSGKT).

It belongs to the RecA family.

It is found in the cytoplasm. In terms of biological role, can catalyze the hydrolysis of ATP in the presence of single-stranded DNA, the ATP-dependent uptake of single-stranded DNA by duplex DNA, and the ATP-dependent hybridization of homologous single-stranded DNAs. It interacts with LexA causing its activation and leading to its autocatalytic cleavage. The polypeptide is Protein RecA (Prochlorococcus marinus (strain MIT 9312)).